The sequence spans 311 residues: Aspartate carbamoyltransferase catalytic subunit (311 aa).

Carbamoyl phosphate contacts are provided by Arg-55 and Thr-56. Position 85 (Lys-85) interacts with L-aspartate. 3 residues coordinate carbamoyl phosphate: Arg-106, His-135, and Gln-138. 2 residues coordinate L-aspartate: Arg-168 and Arg-230. Leu-268 and Pro-269 together coordinate carbamoyl phosphate.

The protein belongs to the aspartate/ornithine carbamoyltransferase superfamily. ATCase family. In terms of assembly, heterododecamer (2C3:3R2) of six catalytic PyrB chains organized as two trimers (C3), and six regulatory PyrI chains organized as three dimers (R2).

It catalyses the reaction carbamoyl phosphate + L-aspartate = N-carbamoyl-L-aspartate + phosphate + H(+). It functions in the pathway pyrimidine metabolism; UMP biosynthesis via de novo pathway; (S)-dihydroorotate from bicarbonate: step 2/3. Functionally, catalyzes the condensation of carbamoyl phosphate and aspartate to form carbamoyl aspartate and inorganic phosphate, the committed step in the de novo pyrimidine nucleotide biosynthesis pathway. This Citrobacter koseri (strain ATCC BAA-895 / CDC 4225-83 / SGSC4696) protein is Aspartate carbamoyltransferase catalytic subunit.